Here is a 415-residue protein sequence, read N- to C-terminus: Serine hydroxymethyltransferase (415 aa).

(6S)-5,6,7,8-tetrahydrofolate-binding positions include Leu121 and 125–127 (GHL). At Lys229 the chain carries N6-(pyridoxal phosphate)lysine. 352–354 (SPF) serves as a coordination point for (6S)-5,6,7,8-tetrahydrofolate.

The protein belongs to the SHMT family. Homodimer. The cofactor is pyridoxal 5'-phosphate.

Its subcellular location is the cytoplasm. The enzyme catalyses (6R)-5,10-methylene-5,6,7,8-tetrahydrofolate + glycine + H2O = (6S)-5,6,7,8-tetrahydrofolate + L-serine. The protein operates within one-carbon metabolism; tetrahydrofolate interconversion. Its pathway is amino-acid biosynthesis; glycine biosynthesis; glycine from L-serine: step 1/1. Its function is as follows. Catalyzes the reversible interconversion of serine and glycine with tetrahydrofolate (THF) serving as the one-carbon carrier. This reaction serves as the major source of one-carbon groups required for the biosynthesis of purines, thymidylate, methionine, and other important biomolecules. Also exhibits THF-independent aldolase activity toward beta-hydroxyamino acids, producing glycine and aldehydes, via a retro-aldol mechanism. The protein is Serine hydroxymethyltransferase of Methylobacillus flagellatus (strain ATCC 51484 / DSM 6875 / VKM B-1610 / KT).